The chain runs to 224 residues: Cytochrome c biogenesis ATP-binding export protein CcmA (224 aa).

In terms of domain architecture, ABC transporter spans 1–220; it reads MQNAEAAPAL…EYAHAEVVGA (220 aa). Residue 40–47 participates in ATP binding; sequence GANGSGKT.

The protein belongs to the ABC transporter superfamily. CcmA exporter (TC 3.A.1.107) family. As to quaternary structure, the complex is composed of two ATP-binding proteins (CcmA) and two transmembrane proteins (CcmB).

The protein localises to the cell inner membrane. The enzyme catalyses heme b(in) + ATP + H2O = heme b(out) + ADP + phosphate + H(+). Functionally, part of the ABC transporter complex CcmAB involved in the biogenesis of c-type cytochromes; once thought to export heme, this seems not to be the case, but its exact role is uncertain. Responsible for energy coupling to the transport system. This Bordetella bronchiseptica (strain ATCC BAA-588 / NCTC 13252 / RB50) (Alcaligenes bronchisepticus) protein is Cytochrome c biogenesis ATP-binding export protein CcmA.